The primary structure comprises 888 residues: Rab GTPase-activating protein eat-17 (888 aa).

Residues 41-60 are compositionally biased toward low complexity; sequence RSNSNSTSSPRNSPSQLSPP. Disordered stretches follow at residues 41 to 87 and 104 to 135; these read RSNS…CETG and LNKSNEEDSRSVASKKTGSSESRKGAREHSPE. Residues 114–123 show a composition bias toward polar residues; that stretch reads SVASKKTGSS. The segment covering 124 to 133 has biased composition (basic and acidic residues); that stretch reads ESRKGAREHS. One can recognise a Rab-GAP TBC domain in the interval 173–357; sequence GIPQHFRMIA…RIMDCFLVEG (185 aa). A disordered region spans residues 631 to 654; that stretch reads ASIEKESTSEAHSTQQQPSPPLTS. Residues 694 to 770 adopt a coiled-coil conformation; the sequence is EADTLAELKE…ESEFNEGRIN (77 aa). A disordered region spans residues 854–888; that stretch reads LAEEGSATETDELRPKELNDGNDTTDSGVQLSDSH. Over residues 874–888 the composition is skewed to polar residues; the sequence is GNDTTDSGVQLSDSH.

As to quaternary structure, may interact with rab-6.2 (in GTP-bound form). Highly expressed in the terminal bulb muscles, pharyngeal muscle, in intestine and vulva.

Its function is as follows. Rab GTPase activating protein for the small GTPase rab-6.2. Required for grinder formation, which is the feeding organ that breaks down food. The polypeptide is Rab GTPase-activating protein eat-17 (Caenorhabditis elegans).